The following is a 352-amino-acid chain: Protein-glutamate methylesterase/protein-glutamine glutaminase (352 aa).

The Response regulatory domain occupies 5-123 (RILIVDDSVI…SKEKAIEYIR (119 aa)). Position 56 is a 4-aspartylphosphate (Asp-56). The CheB-type methylesterase domain occupies 166–352 (EIVAIGVSTG…LAEEIIRRIG (187 aa)). Residues Ser-173, His-200, and Asp-296 contribute to the active site.

This sequence belongs to the CheB family. Post-translationally, phosphorylated by CheA. Phosphorylation of the N-terminal regulatory domain activates the methylesterase activity.

The protein resides in the cytoplasm. The catalysed reaction is [protein]-L-glutamate 5-O-methyl ester + H2O = L-glutamyl-[protein] + methanol + H(+). It carries out the reaction L-glutaminyl-[protein] + H2O = L-glutamyl-[protein] + NH4(+). In terms of biological role, involved in chemotaxis. Part of a chemotaxis signal transduction system that modulates chemotaxis in response to various stimuli. Catalyzes the demethylation of specific methylglutamate residues introduced into the chemoreceptors (methyl-accepting chemotaxis proteins or MCP) by CheR. Also mediates the irreversible deamidation of specific glutamine residues to glutamic acid. The protein is Protein-glutamate methylesterase/protein-glutamine glutaminase of Trichodesmium erythraeum (strain IMS101).